The chain runs to 197 residues: MTKGKKKQTVELDLNKVEKLEHLMPVPKSRQSSITSVESEDGSLKEVLKPPPRKDFEDLASFESYIRDETWDNEFDYCHAHLTYYPPFVLKEVHDDIEKIKPTMNKNSSKFRRNLQHHIQRHLILEMEKCCGFEMDFGKAKMEETPKNIIWRYEDSGDHGFPKEEEDKFNRHWKLELEVSCNNENPLVQVDYKAIPV.

Positions 22–50 (HLMPVPKSRQSSITSVESEDGSLKEVLKP) are disordered.

It belongs to the RGI1 family.

The protein localises to the cell membrane. Involved in the control of energetic metabolism and significantly contribute to cell fitness, especially under respiratory growth conditions. This is Respiratory growth induced protein 1 (RGI1) from Clavispora lusitaniae (strain ATCC 42720) (Yeast).